Reading from the N-terminus, the 129-residue chain is Small ribosomal subunit protein uS11 (129 aa).

This sequence belongs to the universal ribosomal protein uS11 family. Part of the 30S ribosomal subunit. Interacts with proteins S7 and S18. Binds to IF-3.

In terms of biological role, located on the platform of the 30S subunit, it bridges several disparate RNA helices of the 16S rRNA. Forms part of the Shine-Dalgarno cleft in the 70S ribosome. This chain is Small ribosomal subunit protein uS11, found in Staphylococcus haemolyticus (strain JCSC1435).